The primary structure comprises 960 residues: Dynamin-like GTPase OPA1, mitochondrial (960 aa).

A mitochondrion-targeting transit peptide spans 1–87 (MWRAGRAALA…TKYGYQPRRN (87 aa)). Residues 88 to 96 (FWPARLAAR) are Mitochondrial matrix-facing. Residues 97–113 (LLKLRYIILGSAVGGGY) traverse the membrane as a helical segment. The Mitochondrial intermembrane portion of the chain corresponds to 114–770 (TAKKTFDEWK…NAIENMIGPD (657 aa)). Positions 210 to 254 (SDKEKIDQLQEELLHTQLKYQRILERLEKENKELRKLVLQKDDKG) form a coiled coil. Residues 217–222 (QLQEEL) carry the LQQQIQ motif motif. The residue at position 228 (Lys228) is an N6-acetyllysine. The short motif at 234-239 (ERLEKE) is the LQQQIQ motif element. The Dynamin-type G domain maps to 285-561 (QDHLPRVVVV…FWKMVRESVE (277 aa)). The interval 295–302 (GDQSAGKT) is G1 motif. The GTP site is built by Ser298, Gly300, Lys301, Thr302, Ser303, and Gly317. Residue Thr302 participates in Mg(2+) binding. The interval 321 to 324 (MMTR) is G2 motif. 2 residues coordinate Mg(2+): Thr323 and Asp398. Positions 398–401 (DLPG) are G3 motif. The segment at 467 to 470 (TKVD) is G4 motif. The GTP site is built by Lys468, Asp470, and Thr503. Residues 501 to 504 (VVTG) are G5 motif. 2 stalk region regions span residues 589–836 (DRNE…IKDT) and 874–928 (CNDV…VKLL). A paddle region region spans residues 736-856 (SDKQQWDAAI…KTALNHCNLC (121 aa)). The stretch at 771–781 (WKKRWIYWKNR) is an intramembrane region. At 782 to 960 (TQEQCVHNET…AFIEALHQEK (179 aa)) the chain is on the mitochondrial intermembrane side. Cys856 and Cys874 are disulfide-bonded. Residues 895–960 (RQQLTNTEVR…AFIEALHQEK (66 aa)) are a coiled coil.

The protein belongs to the TRAFAC class dynamin-like GTPase superfamily. Dynamin/Fzo/YdjA family. As to quaternary structure, oligomeric complex consisting of membrane-bound and soluble forms of OPA1. Interacts with RCC1L; RCC1L acts as a guanine nucleotide exchange factor (GEF) for OPA1 by exchanging bound GDP for free GTP. Interacts with CHCHD3 and IMMT; these interactions occur preferentially with soluble OPA1 forms. Interacts with PRELID1. In terms of processing, cleaved by OMA1 or YME1L downstream of the transmembrane region in response to different signals to generate soluble forms. Cleaved by OMA1 at position S1 following stress conditions, generating the short soluble form (Dynamin-like GTPase OPA1, short form; S-OPA1). AFG3L2 is involved in the regulation of OMA1-dependent processing of OPA1. PARL-dependent proteolytic processing releases an antiapoptotic soluble form not required for mitochondrial fusion. Cleavage at position S2 by YME1L is required to mediate oxidative phosphorylation (OXPHOS)-induced mitochondrial fusion. Cleavage occurs in the sequence motif Leu-Gln-Gln-Gln-Ile-Gln (LQQQIQ). In terms of tissue distribution, expressed in brain as well as retinal ganglion, starbust amacrine and horizontal cells of the retina. Absent from nerve fibers and photoreceptor cells of the retina.

The protein localises to the mitochondrion inner membrane. It is found in the mitochondrion intermembrane space. The enzyme catalyses GTP + H2O = GDP + phosphate + H(+). Its activity is regulated as follows. Activated by guanine nucleotide exchange factor RCC1L. In terms of biological role, dynamin-related GTPase that is essential for normal mitochondrial morphology by mediating fusion of the mitochondrial inner membranes, regulating cristae morphology and maintaining respiratory chain function. Exists in two forms: the transmembrane, long form (Dynamin-like GTPase OPA1, long form; L-OPA1), which is tethered to the inner mitochondrial membrane, and the short soluble form (Dynamin-like GTPase OPA1, short form; S-OPA1), which results from proteolytic cleavage and localizes in the intermembrane space. Both forms (L-OPA1 and S-OPA1) cooperate to catalyze the fusion of the mitochondrial inner membrane. The equilibrium between L-OPA1 and S-OPA1 is essential: excess levels of S-OPA1, produced by cleavage by OMA1 following loss of mitochondrial membrane potential, lead to an impaired equilibrium between L-OPA1 and S-OPA1, inhibiting mitochondrial fusion. The balance between L-OPA1 and S-OPA1 also influences cristae shape and morphology. Involved in remodeling cristae and the release of cytochrome c during apoptosis. Proteolytic processing by PARL in response to intrinsic apoptotic signals may lead to disassembly of OPA1 oligomers and release of the caspase activator cytochrome C (CYCS) into the mitochondrial intermembrane space. Acts as a regulator of T-helper Th17 cells, which are characterized by cells with fused mitochondria with tight cristae, by mediating mitochondrial membrane remodeling: OPA1 is required for interleukin-17 (IL-17) production. Its role in mitochondrial morphology is required for mitochondrial genome maintenance. Its function is as follows. Constitutes the transmembrane long form (L-OPA1) that plays a central role in mitochondrial inner membrane fusion and cristae morphology. L-OPA1 and the soluble short form (S-OPA1) form higher-order helical assemblies that coordinate the fusion of mitochondrial inner membranes. Inner membrane-anchored L-OPA1 molecules initiate membrane remodeling by recruiting soluble S-OPA1 to rapidly polymerize into a flexible cylindrical scaffold encaging the mitochondrial inner membrane. Once at the membrane surface, the formation of S-OPA1 helices induce bilayer curvature. OPA1 dimerization through the paddle region, which inserts into cardiolipin-containing membrane, promotes GTP hydrolysis and the helical assembly of a flexible OPA1 lattice on the membrane, which drives membrane curvature and mitochondrial fusion. Plays a role in the maintenance and remodeling of mitochondrial cristae, some invaginations of the mitochondrial inner membrane that provide an increase in the surface area. Probably acts by forming helical filaments at the inside of inner membrane tubes with the shape and dimensions of crista junctions. The equilibrium between L-OPA1 and S-OPA1 influences cristae shape and morphology: increased L-OPA1 levels promote cristae stacking and elongated mitochondria, while increased S-OPA1 levels correlated with irregular cristae packing and round mitochondria shape. Constitutes the soluble short form (S-OPA1) generated by cleavage by OMA1, which plays a central role in mitochondrial inner membrane fusion and cristae morphology. The transmembrane long form (L-OPA1) and the S-OPA1 form higher-order helical assemblies that coordinate the fusion of mitochondrial inner membranes. Inner membrane-anchored L-OPA1 molecules initiate membrane remodeling by recruiting soluble S-OPA1 to rapidly polymerize into a flexible cylindrical scaffold encaging the mitochondrial inner membrane. Once at the membrane surface, the formation of S-OPA1 helices induce bilayer curvature. OPA1 dimerization through the paddle region, which inserts into cardiolipin-containing membrane, promotes GTP hydrolysis and the helical assembly of a flexible OPA1 lattice on the membrane, which drives membrane curvature and mitochondrial fusion. Excess levels of S-OPA1 produced by cleavage by OMA1 following stress conditions that induce loss of mitochondrial membrane potential, lead to an impaired equilibrium between L-OPA1 and S-OPA1, thereby inhibiting mitochondrial fusion. Involved in mitochondrial safeguard in response to transient mitochondrial membrane depolarization by mediating flickering: cleavage by OMA1 leads to excess production of S-OPA1, preventing mitochondrial hyperfusion. Plays a role in the maintenance and remodeling of mitochondrial cristae, some invaginations of the mitochondrial inner membrane that provide an increase in the surface area. Probably acts by forming helical filaments at the inside of inner membrane tubes with the shape and dimensions of crista junctions. The equilibrium between L-OPA1 and S-OPA1 influences cristae shape and morphology: increased L-OPA1 levels promote cristae stacking and elongated mitochondria, while increased S-OPA1 levels correlated with irregular cristae packing and round mitochondria shape. Functionally, isoforms that contain the alternative exon 4b are required for mitochondrial genome maintenance, possibly by anchoring the mitochondrial nucleoids to the inner mitochondrial membrane. The sequence is that of Dynamin-like GTPase OPA1, mitochondrial from Rattus norvegicus (Rat).